Here is a 131-residue protein sequence, read N- to C-terminus: Small ribosomal subunit protein eS6 (131 aa).

A disordered region spans residues 76–95 (APPGFKPKRKGERRRKTVRG). Basic residues predominate over residues 81–93 (KPKRKGERRRKTV).

It belongs to the eukaryotic ribosomal protein eS6 family.

This is Small ribosomal subunit protein eS6 from Methanocaldococcus jannaschii (strain ATCC 43067 / DSM 2661 / JAL-1 / JCM 10045 / NBRC 100440) (Methanococcus jannaschii).